Here is a 655-residue protein sequence, read N- to C-terminus: Macrolide export ATP-binding/permease protein MacB (655 aa).

In terms of domain architecture, ABC transporter spans 6-244 (IELRDVWREF…DALAGDEGPE (239 aa)). 42–49 (GASGSGKS) contacts ATP. The interval 225–252 (DQARPDAPPLDALAGDEGPEAPRPAPQP) is disordered. The next 4 membrane-spanning stretches (helical) occupy residues 280 to 300 (LTML…ALGA), 527 to 547 (LTLL…IGVM), 583 to 603 (VLVC…IGVL), and 620 to 640 (SMVL…FLPA).

This sequence belongs to the ABC transporter superfamily. Macrolide exporter (TC 3.A.1.122) family. Homodimer.

The protein localises to the cell inner membrane. Its function is as follows. Non-canonical ABC transporter that contains transmembrane domains (TMD), which form a pore in the inner membrane, and an ATP-binding domain (NBD), which is responsible for energy generation. Confers resistance against macrolides. The chain is Macrolide export ATP-binding/permease protein MacB from Bordetella avium (strain 197N).